The chain runs to 214 residues: Predicted GPI-anchored protein 57 (214 aa).

The first 18 residues, 1–18 (MLFTQLIILFTFISQIIC), serve as a signal peptide directing secretion. The interval 36–101 (RGSSGHSSGG…SSGSSSGSRN (66 aa)) is disordered. Residues 42–60 (SSGGGHSSSGSHSSGGGHS) show a composition bias toward gly residues. A compositionally biased stretch (low complexity) spans 76–85 (SGSSSGSSSG). The N-linked (GlcNAc...) asparagine glycan is linked to Asn182. A lipid anchor (GPI-anchor amidated glycine) is attached at Gly191. Positions 192–214 (VSLNIPSTHFYVIGLAAAYSIVL) are cleaved as a propeptide — removed in mature form.

It belongs to the PGA37 family.

Its subcellular location is the secreted. The protein localises to the cell membrane. In terms of biological role, predicted GPI-anchored protein which may have a role during host infection. This is Predicted GPI-anchored protein 57 (PGA57) from Candida albicans (strain SC5314 / ATCC MYA-2876) (Yeast).